Consider the following 318-residue polypeptide: Beta-galactosidase small subunit (318 aa).

This sequence belongs to the bacterial beta-galactosidase small subunit family. Heterodimer of a large (LacL) and a small subunit (LacM).

The enzyme catalyses Hydrolysis of terminal non-reducing beta-D-galactose residues in beta-D-galactosides.. In terms of biological role, component of a beta-galactosidase. This is Beta-galactosidase small subunit from Lactobacillus helveticus (Lactobacillus suntoryeus).